Here is a 558-residue protein sequence, read N- to C-terminus: Polysialic acid transport protein KpsD (558 aa).

The N-terminal stretch at 1 to 20 (MKLFKSILLIAACHAAQASA) is a signal peptide.

This sequence to E.coli K5 KpsD.

The protein localises to the periplasm. In terms of biological role, involved in the translocation of the polysialic acid capsule across the outer membrane to the cell surface. May function as the periplasmic binding element of the PSA transport system, in which it transiently interacts with the membrane component of the transporter, binds polysaccharide and transports the polymer to a component in the outer membrane. This Escherichia coli protein is Polysialic acid transport protein KpsD (kpsD).